We begin with the raw amino-acid sequence, 332 residues long: MTVSNNKELLLEVNHLGVSFKIKNDKSLFFAKPQTLKAVKDVSFKLYAGETLGVVGESGCGKSTLARAIIGLVEASEGEILWLGKHLRKQSAKQWKETRKDIQMIFQDPLASLNPRMNIGEIIAEPLKIYQPHLSAAEVKEKVQAMMLKVGLLPNLINRYPHEFSGGQCQRIGIARALIIEPKMIICDEPVSALDVSIQAQVVNLLKSLQKEMGLSLIFIAHDLAVVKHISDRVLVMYLGNAMELGSDVEVYNDTKHPYTKALMSAVPIPDPKLERNKSIELLEGDLPSPINPPSGCVFRTRCLKADENCAKQKPPFTSQNNSHFVACLKVL.

The region spanning K23–M264 is the ABC transporter domain. G56–S63 is an ATP binding site.

The protein belongs to the ABC transporter superfamily. The complex is composed of two ATP-binding proteins (OppD and OppF), two transmembrane proteins (OppB and OppC) and a solute-binding protein (OppA).

It is found in the cell inner membrane. It carries out the reaction a [peptide](out) + ATP + H2O = a [peptide](in) + ADP + phosphate + H(+). Functionally, part of the ABC transporter complex OppABCDF involved in the uptake of oligopeptides. Probably responsible for energy coupling to the transport system. This Haemophilus influenzae (strain ATCC 51907 / DSM 11121 / KW20 / Rd) protein is Oligopeptide transport ATP-binding protein OppF (oppF).